A 152-amino-acid chain; its full sequence is Adrenodoxin-like protein 2, mitochondrial (152 aa).

A mitochondrion-targeting transit peptide spans 1 to 29 (MLVINSCRAASRLALRSLNLRSPIATRTF). The 2Fe-2S ferredoxin-type domain maps to 41-146 (VNITFVRANG…GLEVHVPSTI (106 aa)). 4 residues coordinate [2Fe-2S] cluster: Cys80, Cys86, Cys89, and Cys127.

It belongs to the adrenodoxin/putidaredoxin family. [2Fe-2S] cluster is required as a cofactor.

It is found in the mitochondrion. Its function is as follows. Required for ecdysteroidogenesis in the prothoracic gland which is necessary for larval to pupal transition. The polypeptide is Adrenodoxin-like protein 2, mitochondrial (Drosophila melanogaster (Fruit fly)).